A 404-amino-acid chain; its full sequence is ATP phosphoribosyltransferase regulatory subunit (404 aa).

Belongs to the class-II aminoacyl-tRNA synthetase family. HisZ subfamily. In terms of assembly, heteromultimer composed of HisG and HisZ subunits.

Its subcellular location is the cytoplasm. Its pathway is amino-acid biosynthesis; L-histidine biosynthesis; L-histidine from 5-phospho-alpha-D-ribose 1-diphosphate: step 1/9. In terms of biological role, required for the first step of histidine biosynthesis. May allow the feedback regulation of ATP phosphoribosyltransferase activity by histidine. The protein is ATP phosphoribosyltransferase regulatory subunit of Trichormus variabilis (strain ATCC 29413 / PCC 7937) (Anabaena variabilis).